The sequence spans 321 residues: Glucokinase (321 aa).

ATP is bound at residue 8–13; it reads ADIGGT.

Belongs to the bacterial glucokinase family.

Its subcellular location is the cytoplasm. The catalysed reaction is D-glucose + ATP = D-glucose 6-phosphate + ADP + H(+). This chain is Glucokinase, found in Photorhabdus laumondii subsp. laumondii (strain DSM 15139 / CIP 105565 / TT01) (Photorhabdus luminescens subsp. laumondii).